The chain runs to 56 residues: Large ribosomal subunit protein bL33 (56 aa).

The protein belongs to the bacterial ribosomal protein bL33 family.

This Ehrlichia ruminantium (strain Gardel) protein is Large ribosomal subunit protein bL33.